Reading from the N-terminus, the 381-residue chain is Putative acetyl-CoA C-acetyltransferase VraB (381 aa).

The Acyl-thioester intermediate role is filled by Cys-86. His-338 functions as the Proton acceptor in the catalytic mechanism.

The protein belongs to the thiolase-like superfamily. Thiolase family.

This Staphylococcus haemolyticus (strain JCSC1435) protein is Putative acetyl-CoA C-acetyltransferase VraB (vraB).